Reading from the N-terminus, the 154-residue chain is Ribosomal RNA large subunit methyltransferase H (154 aa).

S-adenosyl-L-methionine is bound by residues L70, G102, and 121 to 126; that span reads LSRLTF.

Belongs to the RNA methyltransferase RlmH family. As to quaternary structure, homodimer.

It is found in the cytoplasm. The enzyme catalyses pseudouridine(1915) in 23S rRNA + S-adenosyl-L-methionine = N(3)-methylpseudouridine(1915) in 23S rRNA + S-adenosyl-L-homocysteine + H(+). In terms of biological role, specifically methylates the pseudouridine at position 1915 (m3Psi1915) in 23S rRNA. In Geobacter metallireducens (strain ATCC 53774 / DSM 7210 / GS-15), this protein is Ribosomal RNA large subunit methyltransferase H.